The primary structure comprises 206 residues: MKTFKFFTALFATAILTACTLDMERPTNVQYIDKTDVIWQQHLQKIQKIQSYQAKGQIGYISPTERFSSRFEWQYQNPKSYTLKLYSLISKSTLWIQMHQSGMTISDNNGNQQSAANAKLLLQEIIGMDVPLEHLAYWLKGQPAMNADYQVGTNHLLGAFTYHVDGSQWTADYLTYHSNNSMPENILLKNDSTKQTLKIRVDEWIY.

A signal peptide spans 1-18 (MKTFKFFTALFATAILTA). The N-palmitoyl cysteine moiety is linked to residue Cys19. Residue Cys19 is the site of S-diacylglycerol cysteine attachment.

This sequence belongs to the LolB family. Monomer.

It is found in the cell outer membrane. Plays a critical role in the incorporation of lipoproteins in the outer membrane after they are released by the LolA protein. The chain is Outer-membrane lipoprotein LolB from Haemophilus influenzae (strain PittGG).